The sequence spans 242 residues: MKIITFSHYKEVTDDVLKDSYAVVIDLLRATSTMIWAISNGAKGIIPVEDISEARLLKRLDESVLLGGERGGLKIEGFDLDNSPLSYKKEAIFGKTVVMTTTNGTRALKKASCAKRIFLGSFINAKKTAEYIMKETLHYNIDTISIVCAGTEEKFTLEDILCAGYFVDLFIENFPDVFLDDLSLASHVLYKKFENDPHEILKYSYHYNHLKKLGFEADLEFCLRKDFVDCVCEFRNLVVEKV.

It belongs to the ComB family. It depends on Mg(2+) as a cofactor.

It catalyses the reaction (2R)-O-phospho-3-sulfolactate + H2O = (2R)-3-sulfolactate + phosphate. The chain is Probable 2-phosphosulfolactate phosphatase from Caldicellulosiruptor saccharolyticus (strain ATCC 43494 / DSM 8903 / Tp8T 6331).